Consider the following 644-residue polypeptide: Heat shock protein SSC3, mitochondrial (644 aa).

This sequence belongs to the heat shock protein 70 family.

The protein localises to the mitochondrion matrix. It localises to the mitochondrion nucleoid. Its function is as follows. Plays a role in facilitating the assembly of some protein complexes inside the mitochondria. It may initiate the events that lead to refolding of imported precursors in the matrix space. This is Heat shock protein SSC3, mitochondrial (ECM10) from Saccharomyces cerevisiae (strain ATCC 204508 / S288c) (Baker's yeast).